A 597-amino-acid polypeptide reads, in one-letter code: DNA mismatch repair protein MutL (597 aa).

This sequence belongs to the DNA mismatch repair MutL/HexB family.

In terms of biological role, this protein is involved in the repair of mismatches in DNA. It is required for dam-dependent methyl-directed DNA mismatch repair. May act as a 'molecular matchmaker', a protein that promotes the formation of a stable complex between two or more DNA-binding proteins in an ATP-dependent manner without itself being part of a final effector complex. This is DNA mismatch repair protein MutL from Rhodopseudomonas palustris (strain HaA2).